Here is a 227-residue protein sequence, read N- to C-terminus: Cytochrome c oxidase subunit 2 (227 aa).

At 1–14 the chain is on the mitochondrial intermembrane side; sequence MAYPVQLGFQDAAS. A helical transmembrane segment spans residues 15-45; it reads PIMEELLYFHDHTLMIVFLISSLVLYIISLM. The Mitochondrial matrix portion of the chain corresponds to 46–59; it reads LTTKLMHTSTMDAQ. A helical membrane pass occupies residues 60–87; it reads EVETVWTILPAIILILIALPSLRILYMM. Over 88-227 the chain is Mitochondrial intermembrane; it reads DEITTPSLTL…HFEEWLLSMF (140 aa). Residues His161, Cys196, Glu198, Cys200, His204, and Met207 each coordinate Cu cation. Residue Glu198 coordinates Mg(2+).

It belongs to the cytochrome c oxidase subunit 2 family. Component of the cytochrome c oxidase (complex IV, CIV), a multisubunit enzyme composed of 14 subunits. The complex is composed of a catalytic core of 3 subunits MT-CO1, MT-CO2 and MT-CO3, encoded in the mitochondrial DNA, and 11 supernumerary subunits COX4I, COX5A, COX5B, COX6A, COX6B, COX6C, COX7A, COX7B, COX7C, COX8 and NDUFA4, which are encoded in the nuclear genome. The complex exists as a monomer or a dimer and forms supercomplexes (SCs) in the inner mitochondrial membrane with NADH-ubiquinone oxidoreductase (complex I, CI) and ubiquinol-cytochrome c oxidoreductase (cytochrome b-c1 complex, complex III, CIII), resulting in different assemblies (supercomplex SCI(1)III(2)IV(1) and megacomplex MCI(2)III(2)IV(2)). Found in a complex with TMEM177, COA6, COX18, COX20, SCO1 and SCO2. Interacts with TMEM177 in a COX20-dependent manner. Interacts with COX20. Interacts with COX16. Requires Cu cation as cofactor.

The protein resides in the mitochondrion inner membrane. The enzyme catalyses 4 Fe(II)-[cytochrome c] + O2 + 8 H(+)(in) = 4 Fe(III)-[cytochrome c] + 2 H2O + 4 H(+)(out). Its function is as follows. Component of the cytochrome c oxidase, the last enzyme in the mitochondrial electron transport chain which drives oxidative phosphorylation. The respiratory chain contains 3 multisubunit complexes succinate dehydrogenase (complex II, CII), ubiquinol-cytochrome c oxidoreductase (cytochrome b-c1 complex, complex III, CIII) and cytochrome c oxidase (complex IV, CIV), that cooperate to transfer electrons derived from NADH and succinate to molecular oxygen, creating an electrochemical gradient over the inner membrane that drives transmembrane transport and the ATP synthase. Cytochrome c oxidase is the component of the respiratory chain that catalyzes the reduction of oxygen to water. Electrons originating from reduced cytochrome c in the intermembrane space (IMS) are transferred via the dinuclear copper A center (CU(A)) of subunit 2 and heme A of subunit 1 to the active site in subunit 1, a binuclear center (BNC) formed by heme A3 and copper B (CU(B)). The BNC reduces molecular oxygen to 2 water molecules using 4 electrons from cytochrome c in the IMS and 4 protons from the mitochondrial matrix. This is Cytochrome c oxidase subunit 2 (MT-CO2) from Propithecus tattersalli (Golden-crowned Sifaka).